Consider the following 169-residue polypeptide: Endoribonuclease YbeY (169 aa).

3 residues coordinate Zn(2+): His-135, His-139, and His-145.

It belongs to the endoribonuclease YbeY family. Requires Zn(2+) as cofactor.

It is found in the cytoplasm. Single strand-specific metallo-endoribonuclease involved in late-stage 70S ribosome quality control and in maturation of the 3' terminus of the 16S rRNA. The protein is Endoribonuclease YbeY of Lachnospira eligens (strain ATCC 27750 / DSM 3376 / VPI C15-48 / C15-B4) (Eubacterium eligens).